The sequence spans 103 residues: Histone H4 (103 aa).

Residues 1 to 14 (MTGRGKGGKGLGKG) show a composition bias toward gly residues. The interval 1-20 (MTGRGKGGKGLGKGGAKRHR) is disordered. N6-acetyl-N6-methyllysine; alternate is present on Lys6. N6-methyllysine; alternate occurs at positions 6, 9, and 13. Lys13 carries the post-translational modification N6-acetyl-N6-methyllysine; alternate. A DNA-binding region spans residues 17-21 (KRHRK). N6-glutaryllysine is present on Lys92.

This sequence belongs to the histone H4 family. In terms of assembly, the nucleosome is a histone octamer containing two molecules each of H2A, H2B, H3 and H4 assembled in one H3-H4 heterotetramer and two H2A-H2B heterodimers. The octamer wraps approximately 147 bp of DNA. In terms of processing, glutarylation at Lys-92 (H4K91glu) destabilizes nucleosomes by promoting dissociation of the H2A-H2B dimers from nucleosomes.

It localises to the nucleus. The protein resides in the chromosome. Its function is as follows. Core component of nucleosome. Nucleosomes wrap and compact DNA into chromatin, limiting DNA accessibility to the cellular machineries which require DNA as a template. Histones thereby play a central role in transcription regulation, DNA repair, DNA replication and chromosomal stability. DNA accessibility is regulated via a complex set of post-translational modifications of histones, also called histone code, and nucleosome remodeling. This chain is Histone H4 (hH4-1), found in Neurospora crassa (strain ATCC 24698 / 74-OR23-1A / CBS 708.71 / DSM 1257 / FGSC 987).